A 292-amino-acid polypeptide reads, in one-letter code: NAD kinase (292 aa).

Catalysis depends on Asp73, which acts as the Proton acceptor. NAD(+) is bound by residues 73–74, 147–148, His158, Arg175, Asp177, 188–193, and Gln247; these read DG, NE, and TAYSLS.

Belongs to the NAD kinase family. A divalent metal cation is required as a cofactor.

The protein resides in the cytoplasm. It carries out the reaction NAD(+) + ATP = ADP + NADP(+) + H(+). Its function is as follows. Involved in the regulation of the intracellular balance of NAD and NADP, and is a key enzyme in the biosynthesis of NADP. Catalyzes specifically the phosphorylation on 2'-hydroxyl of the adenosine moiety of NAD to yield NADP. This chain is NAD kinase, found in Escherichia coli (strain UTI89 / UPEC).